The chain runs to 735 residues: Receptor-type guanylate cyclase gcy-27 (735 aa).

Asn11 is a glycosylation site (N-linked (GlcNAc...) asparagine). Residues 28-48 form a helical membrane-spanning segment; sequence FIICTLPVPIYFVVVAIWTIN. Residues 188–465 form the Protein kinase domain; the sequence is ALTSRRRVFG…IENLRNAIAI (278 aa). Residues 538–668 form the Guanylate cyclase domain; sequence TVMFVQICDF…DTVNFASRMQ (131 aa).

The protein belongs to the adenylyl cyclase class-4/guanylyl cyclase family. As to expression, expressed bilaterally in ASK, ASI and ASJ sensory neurons.

It localises to the cell membrane. It catalyses the reaction GTP = 3',5'-cyclic GMP + diphosphate. Functionally, guanylate cyclase involved in the production of the second messenger cGMP. May be involved in sensitivity to quinine by regulating egl-4 activity through the production of cGMP. Promotes the calcium flux to the cytoplasm in ASJ sensory neurons upon removal of a nitric oxide (NO) stimulus and is thereby involved in the behavioral avoidance response to NO-producing organisms like P.aeruginosa. The sequence is that of Receptor-type guanylate cyclase gcy-27 from Caenorhabditis elegans.